The following is a 237-amino-acid chain: Demethylmenaquinone methyltransferase (237 aa).

S-adenosyl-L-methionine contacts are provided by residues T62, D80, 102 to 103 (DA), and S119.

Belongs to the class I-like SAM-binding methyltransferase superfamily. MenG/UbiE family.

The catalysed reaction is a 2-demethylmenaquinol + S-adenosyl-L-methionine = a menaquinol + S-adenosyl-L-homocysteine + H(+). Its pathway is quinol/quinone metabolism; menaquinone biosynthesis; menaquinol from 1,4-dihydroxy-2-naphthoate: step 2/2. In terms of biological role, methyltransferase required for the conversion of demethylmenaquinol (DMKH2) to menaquinol (MKH2). The sequence is that of Demethylmenaquinone methyltransferase from Renibacterium salmoninarum (strain ATCC 33209 / DSM 20767 / JCM 11484 / NBRC 15589 / NCIMB 2235).